A 1060-amino-acid chain; its full sequence is Bumetanide-sensitive sodium-(potassium)-chloride cotransporter (1060 aa).

Over 1-122 the chain is Cytoplasmic; it reads MNDENRFNVS…KSPTPAVGIK (122 aa). The next 2 membrane-spanning stretches (helical) occupy residues 123–143 and 154–174; these read LGWIQGVFIPCLLNIWGVMLF and GIGLSLVIIAISAIVCVITTL. At 175–197 the chain is on the cytoplasmic side; sequence SMSAICTNGEVKGGGIYYIISRS. 2 consecutive transmembrane segments (helical) span residues 198 to 218 and 250 to 270; these read LGPEFGASVGIIFAFANAVAA and IVGTVALLVMCIICAIGMDWE. At 271–275 the chain is on the cytoplasmic side; sequence SKAQN. 2 helical membrane passes run 276-296 and 332-352; these read FLIAIIVGAMVDFVVGTIMGP and FFSVFAIFFPSVTGIQAGANI. Residues 353-367 lie on the Cytoplasmic side of the membrane; sequence SGDLKDPASAIPKGT. The helical transmembrane segment at 368–388 threads the bilayer; sequence LLALLISMVSYTLMVLFAGGG. N-linked (GlcNAc...) asparagine glycosylation is found at N396, N404, and N419. Residues 432–452 form a helical membrane-spanning segment; the sequence is VMQLMSAWGPFIYGGCWAATL. At 453 to 497 the chain is on the cytoplasmic side; that stretch reads STALTNLLSVPRLIQALGVDRIYPGLIFFSKPYGRHGEPYRGYVL. 2 helical membrane passes run 498–518 and 563–583; these read TFFVSLLFLLIADLNTIAPLI and CVAIMLLVHWVMSLVTFAIFF. Residues 584-642 are Cytoplasmic-facing; it reads TLYLIVHYRRPDVNWGSSTQAQMYKTALSSAHALARTGEHVKNYWPQLLVLAGRPQARP. Residues 643 to 663 traverse the membrane as a helical segment; that stretch reads ALVDLGNLISKAGSLMIVGDI. N816 carries N-linked (GlcNAc...) asparagine glycosylation. A helical membrane pass occupies residues 882–902; the sequence is TLDVWWLYDDGGLTILLPYII. Topologically, residues 903 to 1060 are cytoplasmic; it reads SQRSAWANCK…NHTSVLTFYS (158 aa).

This sequence belongs to the SLC12A transporter family.

The protein resides in the membrane. In terms of biological role, electrically silent transporter system. Mediates sodium and chloride reabsorption. Plays a vital role in the regulation of ionic balance and cell volume. The polypeptide is Bumetanide-sensitive sodium-(potassium)-chloride cotransporter (Manduca sexta (Tobacco hawkmoth)).